The chain runs to 876 residues: Ergothioneine biosynthesis protein 1 (876 aa).

Residues 36–350 (IIDIRRVAVE…TYGNEYGLHL (315 aa)) are L-histidine N(alpha)-methyltransferase. Tyrosine 88 lines the L-histidine pocket. Residues glycine 119, lysine 125, and aspartate 146 each contribute to the S-adenosyl-L-methionine site. L-histidine contacts are provided by residues asparagine 202, tyrosine 242, and 315–317 (EQS). The hercynylcysteine S-oxide synthase stretch occupies residues 378–874 (ALWATWDVVT…YAWVGARVVR (497 aa)). Residues histidine 413, histidine 506, and histidine 510 each contribute to the Fe cation site. 2 disordered regions span residues 631 to 650 (GTTNSVSGHHSNRTSKQQLP) and 732 to 761 (TNNGVEITPPSSPSSETPAESSSPSDSNTT). Positions 744–758 (PSSETPAESSSPSDS) are enriched in low complexity.

This sequence in the N-terminal section; belongs to the methyltransferase superfamily. EgtD family. It in the C-terminal section; belongs to the EgtB family. Fe(2+) serves as cofactor.

The protein localises to the cytoplasm. It is found in the nucleus. The catalysed reaction is L-histidine + 3 S-adenosyl-L-methionine = hercynine + 3 S-adenosyl-L-homocysteine + 3 H(+). The enzyme catalyses hercynine + L-cysteine + O2 = S-(hercyn-2-yl)-L-cysteine S-oxide + H2O. It participates in amino-acid biosynthesis; ergothioneine biosynthesis. Catalyzes the SAM-dependent triple methylation of the alpha-amino group of histidine to form hercynine and subsequent conjugation with cysteine and oxygen to form hercynylcysteine sulfoxide, the first two steps in the biosynthesis pathway of ergothioneine. Ergothioneine is an unusual thio-histidine betaine amino acid that acts as an antioxidant against peroxide in conidia and contributes to conidial longevity. The polypeptide is Ergothioneine biosynthesis protein 1 (Neurospora crassa (strain ATCC 24698 / 74-OR23-1A / CBS 708.71 / DSM 1257 / FGSC 987)).